Here is a 145-residue protein sequence, read N- to C-terminus: Aspartate 1-decarboxylase (145 aa).

The active-site Schiff-base intermediate with substrate; via pyruvic acid is the Ser-25. A Pyruvic acid (Ser) modification is found at Ser-25. Position 57 (Thr-57) interacts with substrate. The Proton donor role is filled by Tyr-58. Residue 73–75 coordinates substrate; it reads GAA.

This sequence belongs to the PanD family. As to quaternary structure, heterooctamer of four alpha and four beta subunits. The cofactor is pyruvate. Is synthesized initially as an inactive proenzyme, which is activated by self-cleavage at a specific serine bond to produce a beta-subunit with a hydroxyl group at its C-terminus and an alpha-subunit with a pyruvoyl group at its N-terminus.

It localises to the cytoplasm. The catalysed reaction is L-aspartate + H(+) = beta-alanine + CO2. The protein operates within cofactor biosynthesis; (R)-pantothenate biosynthesis; beta-alanine from L-aspartate: step 1/1. Functionally, catalyzes the pyruvoyl-dependent decarboxylation of aspartate to produce beta-alanine. This Micrococcus luteus (strain ATCC 4698 / DSM 20030 / JCM 1464 / CCM 169 / CCUG 5858 / IAM 1056 / NBRC 3333 / NCIMB 9278 / NCTC 2665 / VKM Ac-2230) (Micrococcus lysodeikticus) protein is Aspartate 1-decarboxylase.